Consider the following 210-residue polypeptide: Acyl-homoserine-lactone synthase (210 aa).

The protein belongs to the autoinducer synthase family.

The enzyme catalyses a fatty acyl-[ACP] + S-adenosyl-L-methionine = an N-acyl-L-homoserine lactone + S-methyl-5'-thioadenosine + holo-[ACP] + H(+). Its function is as follows. Required for the synthesis of OHHL (N-(3-oxohexanoyl)-L-homoserine lactone), an autoinducer molecule which binds to EsaR. OHHL is necessary for biosynthesis of EPS virulence factor (extracellular heteropolysaccharide) which plays a role in the development of Stewart's wilt on sweet corn. This chain is Acyl-homoserine-lactone synthase (esaI), found in Pantoea stewartii subsp. stewartii (Erwinia stewartii).